The chain runs to 207 residues: Ribosomal RNA large subunit methyltransferase E (207 aa).

Residues glycine 60, tryptophan 62, aspartate 80, aspartate 96, and aspartate 121 each contribute to the S-adenosyl-L-methionine site. Lysine 161 acts as the Proton acceptor in catalysis.

The protein belongs to the class I-like SAM-binding methyltransferase superfamily. RNA methyltransferase RlmE family.

The protein resides in the cytoplasm. It catalyses the reaction uridine(2552) in 23S rRNA + S-adenosyl-L-methionine = 2'-O-methyluridine(2552) in 23S rRNA + S-adenosyl-L-homocysteine + H(+). In terms of biological role, specifically methylates the uridine in position 2552 of 23S rRNA at the 2'-O position of the ribose in the fully assembled 50S ribosomal subunit. In Marinobacter nauticus (strain ATCC 700491 / DSM 11845 / VT8) (Marinobacter aquaeolei), this protein is Ribosomal RNA large subunit methyltransferase E.